The chain runs to 152 residues: Transcriptional repressor NrdR (152 aa).

Residues 3-34 fold into a zinc finger; the sequence is CPFCNHGELKVIDSRNSPEANAIKRRRECLRC. The ATP-cone domain occupies 48–138; the sequence is IQVLKRDGRY…VYRRFRDVGE (91 aa).

Belongs to the NrdR family. Requires Zn(2+) as cofactor.

In terms of biological role, negatively regulates transcription of bacterial ribonucleotide reductase nrd genes and operons by binding to NrdR-boxes. This chain is Transcriptional repressor NrdR, found in Chlamydia muridarum (strain MoPn / Nigg).